The chain runs to 682 residues: DNA-directed RNA polymerase subunit beta' (682 aa).

4 residues coordinate Zn(2+): C69, C71, C87, and C90. Residues D489, D491, and D493 each coordinate Mg(2+).

Belongs to the RNA polymerase beta' chain family. RpoC1 subfamily. In terms of assembly, in plastids the minimal PEP RNA polymerase catalytic core is composed of four subunits: alpha, beta, beta', and beta''. When a (nuclear-encoded) sigma factor is associated with the core the holoenzyme is formed, which can initiate transcription. Mg(2+) is required as a cofactor. Requires Zn(2+) as cofactor.

It localises to the plastid. Its subcellular location is the chloroplast. The enzyme catalyses RNA(n) + a ribonucleoside 5'-triphosphate = RNA(n+1) + diphosphate. Its function is as follows. DNA-dependent RNA polymerase catalyzes the transcription of DNA into RNA using the four ribonucleoside triphosphates as substrates. The polypeptide is DNA-directed RNA polymerase subunit beta' (Hordeum vulgare (Barley)).